The primary structure comprises 371 residues: MNKLPHETRVVIGMSGGVDSSVAALLLKEQGYDVIGIFMKNWDDTDENGVCTATEDYNDVIEVCNQIGIPYYAVNFEKQYWDKVFTYFLDEYRAGRTPNPDVMCNKEIKFKAFLEHAIALGADYVATGHYARVAYMDGEYKMLRGVDDNKDQTYFLNQLSQEQLSKTMFPLGELKKPQIREMAKEAGLATAAKKDSTGICFIGERNFKDFLSNYLPAQPGVMQTLSGEVKGKHDGLMYYTIGQRHGLGIGGNGDPWFAVGKNLKENILYVDQGFHNELLYGDEVIATNVGWVSNEAKEKEFKCTAKFRYRQEDNKVTVQIVDENTVRILCDEPIRAITPGQAVVFYDGDECLGGATIDEVYRSGKKLDYLG.

ATP contacts are provided by residues 13–20 (GMSGGVDS) and methionine 39. The tract at residues 99–101 (NPD) is interaction with target base in tRNA. The active-site Nucleophile is the cysteine 104. A disulfide bridge links cysteine 104 with cysteine 200. Residue glycine 128 participates in ATP binding. Residues 150 to 152 (KDQ) form an interaction with tRNA region. Cysteine 200 serves as the catalytic Cysteine persulfide intermediate. The interval 308 to 309 (RY) is interaction with tRNA.

This sequence belongs to the MnmA/TRMU family.

The protein localises to the cytoplasm. The enzyme catalyses S-sulfanyl-L-cysteinyl-[protein] + uridine(34) in tRNA + AH2 + ATP = 2-thiouridine(34) in tRNA + L-cysteinyl-[protein] + A + AMP + diphosphate + H(+). Its function is as follows. Catalyzes the 2-thiolation of uridine at the wobble position (U34) of tRNA, leading to the formation of s(2)U34. The polypeptide is tRNA-specific 2-thiouridylase MnmA (Bacillus thuringiensis (strain Al Hakam)).